Here is a 330-residue protein sequence, read N- to C-terminus: D-lactate dehydrogenase (330 aa).

Residues 156 to 157 (RI), D176, 206 to 207 (VP), 233 to 235 (AAR), and D259 contribute to the NAD(+) site. R235 is a catalytic residue. The active site involves E264. Catalysis depends on H296, which acts as the Proton donor.

This sequence belongs to the D-isomer specific 2-hydroxyacid dehydrogenase family.

It catalyses the reaction (R)-lactate + NAD(+) = pyruvate + NADH + H(+). The sequence is that of D-lactate dehydrogenase (ldhD) from Staphylococcus aureus.